Here is a 533-residue protein sequence, read N- to C-terminus: Subtilisin-like serine protease pepC (533 aa).

Positions 1–16 (MKGILGLSLLPLLTAA) are cleaved as a signal peptide. Residues 43–136 (SYIVVFKKHV…IERDSEVHTM (94 aa)) form the Inhibitor I9 domain. The Peptidase S8 domain occupies 145–450 (PWGLARISHR…VGIYKRNELT (306 aa)). Catalysis depends on charge relay system residues D181 and H213. N-linked (GlcNAc...) asparagine glycosylation occurs at N283. A disulfide bridge links C320 with C351. S379 serves as the catalytic Charge relay system. N-linked (GlcNAc...) asparagine glycosylation occurs at N435. Polar residues predominate over residues 496-513 (KSCSPRSLVPSTARSRMP). Positions 496-519 (KSCSPRSLVPSTARSRMPSSHRSE) are disordered.

Belongs to the peptidase S8 family.

This chain is Subtilisin-like serine protease pepC (pepC), found in Aspergillus niger.